Reading from the N-terminus, the 588-residue chain is L-fucose isomerase (588 aa).

Catalysis depends on proton acceptor residues glutamate 335 and aspartate 359. Mn(2+)-binding residues include glutamate 335, aspartate 359, and histidine 525.

It belongs to the L-fucose isomerase family. The cofactor is Mn(2+).

It localises to the cytoplasm. The catalysed reaction is L-fucose = L-fuculose. Its pathway is carbohydrate degradation; L-fucose degradation; L-lactaldehyde and glycerone phosphate from L-fucose: step 1/3. Its function is as follows. Converts the aldose L-fucose into the corresponding ketose L-fuculose. This is L-fucose isomerase from Streptococcus pneumoniae (strain JJA).